Consider the following 410-residue polypeptide: Cysteine desulfurase IscS (410 aa).

Residues 80–81, N160, Q188, and 208–210 contribute to the pyridoxal 5'-phosphate site; these read AT and SGH. K211 carries the N6-(pyridoxal phosphate)lysine modification. T248 contacts pyridoxal 5'-phosphate. Residue C334 is the Cysteine persulfide intermediate of the active site. C334 provides a ligand contact to [2Fe-2S] cluster.

This sequence belongs to the class-V pyridoxal-phosphate-dependent aminotransferase family. NifS/IscS subfamily. Homodimer. Forms a heterotetramer with IscU, interacts with other sulfur acceptors. The cofactor is pyridoxal 5'-phosphate.

The protein localises to the cytoplasm. It catalyses the reaction (sulfur carrier)-H + L-cysteine = (sulfur carrier)-SH + L-alanine. It functions in the pathway cofactor biosynthesis; iron-sulfur cluster biosynthesis. In terms of biological role, master enzyme that delivers sulfur to a number of partners involved in Fe-S cluster assembly, tRNA modification or cofactor biosynthesis. Catalyzes the removal of elemental sulfur atoms from cysteine to produce alanine. Functions as a sulfur delivery protein for Fe-S cluster synthesis onto IscU, an Fe-S scaffold assembly protein, as well as other S acceptor proteins. The sequence is that of Cysteine desulfurase IscS from Rickettsia peacockii (strain Rustic).